A 198-amino-acid chain; its full sequence is Ribonuclease HII (198 aa).

In terms of domain architecture, RNase H type-2 spans 6-195 (RRVAGVDEVG…VHHMLYQDKN (190 aa)). The a divalent metal cation site is built by aspartate 12, glutamate 13, and aspartate 103.

This sequence belongs to the RNase HII family. Requires Mn(2+) as cofactor. Mg(2+) serves as cofactor.

The protein resides in the cytoplasm. It catalyses the reaction Endonucleolytic cleavage to 5'-phosphomonoester.. Its function is as follows. Endonuclease that specifically degrades the RNA of RNA-DNA hybrids. This Roseobacter denitrificans (strain ATCC 33942 / OCh 114) (Erythrobacter sp. (strain OCh 114)) protein is Ribonuclease HII.